Reading from the N-terminus, the 183-residue chain is Large ribosomal subunit protein uL6 (183 aa).

Belongs to the universal ribosomal protein uL6 family. Part of the 50S ribosomal subunit.

Functionally, this protein binds to the 23S rRNA, and is important in its secondary structure. It is located near the subunit interface in the base of the L7/L12 stalk, and near the tRNA binding site of the peptidyltransferase center. The polypeptide is Large ribosomal subunit protein uL6 (Methanococcus aeolicus (strain ATCC BAA-1280 / DSM 17508 / OCM 812 / Nankai-3)).